A 290-amino-acid chain; its full sequence is Glycine-N-acyltransferase-like protein 3 (290 aa).

It catalyses the reaction an acyl-CoA + glycine = an N-acylglycine + CoA + H(+). The enzyme catalyses (9Z)-octadecenoyl-CoA + glycine = N-(9Z-octadecenoyl)glycine + CoA + H(+). It carries out the reaction hexadecanoyl-CoA + glycine = N-hexadecanoylglycine + CoA + H(+). It functions in the pathway lipid metabolism. In terms of biological role, catalyzes the conjugation of long-chain fatty acyl-CoA thioester and glycine to produce long-chain N-(fatty acyl)glycine, an intermediate in the primary fatty acid amide biosynthetic pathway. This chain is Glycine-N-acyltransferase-like protein 3, found in Mus musculus (Mouse).